The sequence spans 378 residues: Chaperone protein DnaJ 2 (378 aa).

A J domain is found at 4 to 68 (DYYAVLGVRR…QKKQVYDLGG (65 aa)). The segment at 130-212 (GTTKDIQVET…CAGDGRVRSR (83 aa)) adopts a CR-type zinc-finger fold. The Zn(2+) site is built by Cys143, Cys146, Cys160, Cys163, Cys186, Cys189, Cys200, and Cys203. CXXCXGXG motif repeat units lie at residues 143 to 150 (CTTCSGEG), 160 to 167 (CDMCRGRG), 186 to 193 (CPQCQGFG), and 200 to 207 (CPECAGDG). The segment at 351-378 (RGEERPTGQFQPGQQGLFSRLKDAFNGR) is disordered. The span at 358-367 (GQFQPGQQGL) shows a compositional bias: polar residues.

The protein belongs to the DnaJ family. As to quaternary structure, homodimer. The cofactor is Zn(2+).

It localises to the cytoplasm. Functionally, participates actively in the response to hyperosmotic and heat shock by preventing the aggregation of stress-denatured proteins and by disaggregating proteins, also in an autonomous, DnaK-independent fashion. Unfolded proteins bind initially to DnaJ; upon interaction with the DnaJ-bound protein, DnaK hydrolyzes its bound ATP, resulting in the formation of a stable complex. GrpE releases ADP from DnaK; ATP binding to DnaK triggers the release of the substrate protein, thus completing the reaction cycle. Several rounds of ATP-dependent interactions between DnaJ, DnaK and GrpE are required for fully efficient folding. Also involved, together with DnaK and GrpE, in the DNA replication of plasmids through activation of initiation proteins. The chain is Chaperone protein DnaJ 2 from Streptomyces avermitilis (strain ATCC 31267 / DSM 46492 / JCM 5070 / NBRC 14893 / NCIMB 12804 / NRRL 8165 / MA-4680).